The following is a 654-amino-acid chain: Glutamyl-tRNA(Gln) amidotransferase subunit B, mitochondrial (654 aa).

The transit peptide at 1 to 8 (MGRIPTRE) directs the protein to the mitochondrion. The tract at residues 79–101 (DQAKASKAQAKGKKKRSSADNQT) is disordered.

It belongs to the GatB/GatE family. GatB subfamily. As to quaternary structure, subunit of the heterotrimeric GatCAB amidotransferase (AdT) complex, composed of A, B and C subunits.

It is found in the mitochondrion. It catalyses the reaction L-glutamyl-tRNA(Gln) + L-glutamine + ATP + H2O = L-glutaminyl-tRNA(Gln) + L-glutamate + ADP + phosphate + H(+). Allows the formation of correctly charged Gln-tRNA(Gln) through the transamidation of misacylated Glu-tRNA(Gln) in the mitochondria. The reaction takes place in the presence of glutamine and ATP through an activated gamma-phospho-Glu-tRNA(Gln). The polypeptide is Glutamyl-tRNA(Gln) amidotransferase subunit B, mitochondrial (Pyricularia oryzae (strain 70-15 / ATCC MYA-4617 / FGSC 8958) (Rice blast fungus)).